Here is a 35-residue protein sequence, read N- to C-terminus: Photosystem II reaction center protein M (35 aa).

The helical transmembrane segment at 5 to 25 (ILAVIATALFIIIPTSFLLIL) threads the bilayer.

Belongs to the PsbM family. PSII is composed of 1 copy each of membrane proteins PsbA, PsbB, PsbC, PsbD, PsbE, PsbF, PsbH, PsbI, PsbJ, PsbK, PsbL, PsbM, PsbT, PsbX, PsbY, PsbZ, Psb30/Ycf12, at least 3 peripheral proteins of the oxygen-evolving complex and a large number of cofactors. It forms dimeric complexes.

It localises to the plastid. The protein localises to the chloroplast thylakoid membrane. In terms of biological role, one of the components of the core complex of photosystem II (PSII). PSII is a light-driven water:plastoquinone oxidoreductase that uses light energy to abstract electrons from H(2)O, generating O(2) and a proton gradient subsequently used for ATP formation. It consists of a core antenna complex that captures photons, and an electron transfer chain that converts photonic excitation into a charge separation. This subunit is found at the monomer-monomer interface. The polypeptide is Photosystem II reaction center protein M (Staurastrum punctulatum (Green alga)).